The following is a 234-amino-acid chain: LexA repressor (234 aa).

Residues 26-46 constitute a DNA-binding region (H-T-H motif); it reads FDEMKTALELTSKSGIHRLIT. Catalysis depends on for autocatalytic cleavage activity residues S155 and K193.

It belongs to the peptidase S24 family. As to quaternary structure, homodimer.

The catalysed reaction is Hydrolysis of Ala-|-Gly bond in repressor LexA.. Represses a number of genes involved in the response to DNA damage (SOS response), including recA and lexA. In the presence of single-stranded DNA, RecA interacts with LexA causing an autocatalytic cleavage which disrupts the DNA-binding part of LexA, leading to derepression of the SOS regulon and eventually DNA repair. The protein is LexA repressor of Bartonella henselae (strain ATCC 49882 / DSM 28221 / CCUG 30454 / Houston 1) (Rochalimaea henselae).